A 199-amino-acid polypeptide reads, in one-letter code: RNA-free ribonuclease P (199 aa).

The protein belongs to the HARP family.

The catalysed reaction is Endonucleolytic cleavage of RNA, removing 5'-extranucleotides from tRNA precursor.. Its function is as follows. RNA-free RNase P that catalyzes the removal of the 5'-leader sequence from pre-tRNA to produce the mature 5'-terminus. In Pyrococcus furiosus (strain ATCC 43587 / DSM 3638 / JCM 8422 / Vc1), this protein is RNA-free ribonuclease P.